We begin with the raw amino-acid sequence, 68 residues long: Phage-like element PBSX protein XtrA (68 aa).

To B.subtilis YqaO.

The chain is Phage-like element PBSX protein XtrA (xtrA) from Bacillus subtilis (strain 168).